Consider the following 665-residue polypeptide: Phosphatidylinositol-3-phosphate phosphatase MTMR1 (665 aa).

An N-acetylmethionine modification is found at Met-1. Low complexity predominate over residues 1–11 (MDRPAAAAAAG). The segment at 1 to 51 (MDRPAAAAAAGCEGGGGPNPGPAGGRRPPRAAGGATAGSRQPSVETLDSPT) is disordered. The segment covering 12–24 (CEGGGGPNPGPAG) has biased composition (gly residues). Residues 39–51 (SRQPSVETLDSPT) are compositionally biased toward polar residues. A phosphoserine mark is found at Ser-43 and Ser-49. The 72-residue stretch at 90–161 (NKLAQMEEAP…GVISRVEKIG (72 aa)) folds into the GRAM domain. Residues 226-601 (GWKVYDPVSE…SHLELWVNYY (376 aa)) enclose the Myotubularin phosphatase domain. 3 residues coordinate a 1,2-diacyl-sn-glycero-3-phospho-(1D-myo-inositol-3-phosphate): Asn-351, Asn-376, and Ile-377. The active-site Phosphocysteine intermediate is Cys-438. A 1,2-diacyl-sn-glycero-3-phospho-(1D-myo-inositol-3-phosphate) is bound by residues Ser-439, Asp-440, Gly-441, Trp-442, Asp-443, Arg-444, and Arg-484. Ser-439 contributes to the phosphate binding site. Phosphate contacts are provided by Gly-441, Trp-442, Asp-443, and Arg-444. The tract at residues 608–665 (MRPQMPIHQNLKELLAVRAELQKRVEGLQREVATRAVSSSSERGSSPSHSATSVHTSV) is required for dimerization. The disordered stretch occupies residues 642 to 665 (RAVSSSSERGSSPSHSATSVHTSV). Positions 645–657 (SSSSERGSSPSHS) are enriched in low complexity.

The protein belongs to the protein-tyrosine phosphatase family. Non-receptor class myotubularin subfamily. Homodimer.

It is found in the cell membrane. The protein localises to the cytoplasm. The catalysed reaction is a 1,2-diacyl-sn-glycero-3-phospho-(1D-myo-inositol-3-phosphate) + H2O = a 1,2-diacyl-sn-glycero-3-phospho-(1D-myo-inositol) + phosphate. The enzyme catalyses 1,2-dioctanoyl-sn-glycero-3-phospho-(1-D-myo-inositol-3-phosphate) + H2O = 1,2-dioctanoyl-sn-glycero-3-phospho-(1D-myo-inositol) + phosphate. It carries out the reaction a 1,2-diacyl-sn-glycero-3-phospho-(1D-myo-inositol-3,5-bisphosphate) + H2O = a 1,2-diacyl-sn-glycero-3-phospho-(1D-myo-inositol-5-phosphate) + phosphate. Functionally, lipid phosphatase that specifically dephosphorylates the D-3 position of phosphatidylinositol 3-phosphate, generating phosphatidylinositol. Could also dephosphorylate phosphatidylinositol 3,5-bisphosphate to produce phosphatidylinositol 5-phosphate. In Homo sapiens (Human), this protein is Phosphatidylinositol-3-phosphate phosphatase MTMR1.